The sequence spans 181 residues: Adenylyl-sulfate kinase (181 aa).

Residue 12-19 coordinates ATP; it reads GLSGAGKT. Serine 86 serves as the catalytic Phosphoserine intermediate.

This sequence belongs to the APS kinase family.

The enzyme catalyses adenosine 5'-phosphosulfate + ATP = 3'-phosphoadenylyl sulfate + ADP + H(+). It participates in sulfur metabolism; hydrogen sulfide biosynthesis; sulfite from sulfate: step 2/3. Its function is as follows. Catalyzes the synthesis of activated sulfate. The polypeptide is Adenylyl-sulfate kinase (Rippkaea orientalis (strain PCC 8801 / RF-1) (Cyanothece sp. (strain PCC 8801))).